The sequence spans 365 residues: Putative tRNA 2'-phosphotransferase (365 aa).

2 disordered regions span residues 1–35 and 231–254; these read MYKN…IRPR and LLDA…PESI. Low complexity predominate over residues 17–27; it reads SGTPATKSSSK.

It belongs to the KptA/TPT1 family.

The catalysed reaction is 2'-phospho-[ligated tRNA] + NAD(+) = mature tRNA + ADP-alpha-D-ribose 1'',2''-cyclic phosphate + nicotinamide. In terms of biological role, catalyzes the last step of tRNA splicing, the transfer of the splice junction 2'-phosphate from ligated tRNA to NAD to produce ADP-ribose 1''-2'' cyclic phosphate. This Schizosaccharomyces pombe (strain 972 / ATCC 24843) (Fission yeast) protein is Putative tRNA 2'-phosphotransferase.